The primary structure comprises 123 residues: Ribonuclease P protein component 2 (123 aa).

Belongs to the eukaryotic/archaeal RNase P protein component 2 family. In terms of assembly, consists of a catalytic RNA component and at least 4-5 protein subunits.

The protein localises to the cytoplasm. The enzyme catalyses Endonucleolytic cleavage of RNA, removing 5'-extranucleotides from tRNA precursor.. Its function is as follows. Part of ribonuclease P, a protein complex that generates mature tRNA molecules by cleaving their 5'-ends. This Sulfurisphaera tokodaii (strain DSM 16993 / JCM 10545 / NBRC 100140 / 7) (Sulfolobus tokodaii) protein is Ribonuclease P protein component 2.